The primary structure comprises 383 residues: MSNHWLLPENIADVLPSEARKIEELRRRMLDLFRTYGYELVMPPMLEYLESLLTGTGHDLDLRTLKLVDQLSGRTMGLRADITPQVARIDAHLLNRPGVTRLCYAGNVLHARPAGFHATREPIQIGAEIYGHAGLEADVEIQELMLAALTAAGLSDIRIDLCHAGILEALLAGLPSIRKIEDALFAALETKDVPALRELTAGMPQTERDALLALPTLYGGVEVIERARATLPASPAIGRALDELAALAVQVRGASVNIDLSDLRGYHYHSGVMFAAYVAGLPNYVARGGRYDKVGEAFGRARPATGFSLDLREVAALSPVEVRALAIFAPWDADPALRAAIAGLRAGGEIVIQSLPGHTHELDEFNCDRQLVRKDAGWVVVPR.

The protein belongs to the class-II aminoacyl-tRNA synthetase family. HisZ subfamily. In terms of assembly, heteromultimer composed of HisG and HisZ subunits.

The protein localises to the cytoplasm. Its pathway is amino-acid biosynthesis; L-histidine biosynthesis; L-histidine from 5-phospho-alpha-D-ribose 1-diphosphate: step 1/9. Required for the first step of histidine biosynthesis. May allow the feedback regulation of ATP phosphoribosyltransferase activity by histidine. In Cupriavidus taiwanensis (strain DSM 17343 / BCRC 17206 / CCUG 44338 / CIP 107171 / LMG 19424 / R1) (Ralstonia taiwanensis (strain LMG 19424)), this protein is ATP phosphoribosyltransferase regulatory subunit.